A 78-amino-acid polypeptide reads, in one-letter code: Acyl carrier protein (78 aa).

One can recognise a Carrier domain in the interval 2-77; the sequence is SDTAERVKKI…DAVKYIEKAT (76 aa). S37 is subject to O-(pantetheine 4'-phosphoryl)serine.

The protein belongs to the acyl carrier protein (ACP) family. Post-translationally, 4'-phosphopantetheine is transferred from CoA to a specific serine of apo-ACP by AcpS. This modification is essential for activity because fatty acids are bound in thioester linkage to the sulfhydryl of the prosthetic group.

It localises to the cytoplasm. The protein operates within lipid metabolism; fatty acid biosynthesis. Carrier of the growing fatty acid chain in fatty acid biosynthesis. The polypeptide is Acyl carrier protein (Chelativorans sp. (strain BNC1)).